The chain runs to 158 residues: MAEKNKQDDIKVIATNRKAYHDYFIEETIEAGIELKGTEVKSVRLGHVNLKDSFARVENGEVFLYNMHISPYEKGNIFNVDPMRDRKLLLHKSEINRLAGYVQQKGYTLIPLKIYLKRGKIKVELAVAKGKKLFDKREAIAKRDAELEIRKKMKEYLR.

The protein belongs to the SmpB family.

It is found in the cytoplasm. Its function is as follows. Required for rescue of stalled ribosomes mediated by trans-translation. Binds to transfer-messenger RNA (tmRNA), required for stable association of tmRNA with ribosomes. tmRNA and SmpB together mimic tRNA shape, replacing the anticodon stem-loop with SmpB. tmRNA is encoded by the ssrA gene; the 2 termini fold to resemble tRNA(Ala) and it encodes a 'tag peptide', a short internal open reading frame. During trans-translation Ala-aminoacylated tmRNA acts like a tRNA, entering the A-site of stalled ribosomes, displacing the stalled mRNA. The ribosome then switches to translate the ORF on the tmRNA; the nascent peptide is terminated with the 'tag peptide' encoded by the tmRNA and targeted for degradation. The ribosome is freed to recommence translation, which seems to be the essential function of trans-translation. This chain is SsrA-binding protein, found in Caldicellulosiruptor saccharolyticus (strain ATCC 43494 / DSM 8903 / Tp8T 6331).